We begin with the raw amino-acid sequence, 122 residues long: Large ribosomal subunit protein uL14 (122 aa).

It belongs to the universal ribosomal protein uL14 family. As to quaternary structure, part of the 50S ribosomal subunit. Forms a cluster with proteins L3 and L19. In the 70S ribosome, L14 and L19 interact and together make contacts with the 16S rRNA in bridges B5 and B8.

In terms of biological role, binds to 23S rRNA. Forms part of two intersubunit bridges in the 70S ribosome. This chain is Large ribosomal subunit protein uL14, found in Carboxydothermus hydrogenoformans (strain ATCC BAA-161 / DSM 6008 / Z-2901).